We begin with the raw amino-acid sequence, 181 residues long: Adenine phosphoribosyltransferase (181 aa).

The protein belongs to the purine/pyrimidine phosphoribosyltransferase family. In terms of assembly, homodimer.

The protein localises to the cytoplasm. It catalyses the reaction AMP + diphosphate = 5-phospho-alpha-D-ribose 1-diphosphate + adenine. Its pathway is purine metabolism; AMP biosynthesis via salvage pathway; AMP from adenine: step 1/1. Its function is as follows. Catalyzes a salvage reaction resulting in the formation of AMP, that is energically less costly than de novo synthesis. In Vibrio cholerae serotype O1 (strain ATCC 39541 / Classical Ogawa 395 / O395), this protein is Adenine phosphoribosyltransferase.